A 104-amino-acid polypeptide reads, in one-letter code: Protein translation factor SUI1 homolog (104 aa).

This sequence belongs to the SUI1 family.

The polypeptide is Protein translation factor SUI1 homolog (Ignicoccus hospitalis (strain KIN4/I / DSM 18386 / JCM 14125)).